Consider the following 302-residue polypeptide: UDP-3-O-acyl-N-acetylglucosamine deacetylase (302 aa).

The Zn(2+) site is built by H78, H237, and D241. The active-site Proton donor is H264.

Belongs to the LpxC family. It depends on Zn(2+) as a cofactor.

The enzyme catalyses a UDP-3-O-[(3R)-3-hydroxyacyl]-N-acetyl-alpha-D-glucosamine + H2O = a UDP-3-O-[(3R)-3-hydroxyacyl]-alpha-D-glucosamine + acetate. It functions in the pathway glycolipid biosynthesis; lipid IV(A) biosynthesis; lipid IV(A) from (3R)-3-hydroxytetradecanoyl-[acyl-carrier-protein] and UDP-N-acetyl-alpha-D-glucosamine: step 2/6. Its function is as follows. Catalyzes the hydrolysis of UDP-3-O-myristoyl-N-acetylglucosamine to form UDP-3-O-myristoylglucosamine and acetate, the committed step in lipid A biosynthesis. The polypeptide is UDP-3-O-acyl-N-acetylglucosamine deacetylase (Hahella chejuensis (strain KCTC 2396)).